Here is a 407-residue protein sequence, read N- to C-terminus: Putative nickel insertion protein (407 aa).

Belongs to the LarC family.

This is Putative nickel insertion protein from Gloeothece citriformis (strain PCC 7424) (Cyanothece sp. (strain PCC 7424)).